A 603-amino-acid chain; its full sequence is Elongation factor 4 (603 aa).

A tr-type G domain is found at S7–E189. GTP-binding positions include D19–T24 and N136–D139.

The protein belongs to the TRAFAC class translation factor GTPase superfamily. Classic translation factor GTPase family. LepA subfamily.

It localises to the cell inner membrane. It catalyses the reaction GTP + H2O = GDP + phosphate + H(+). Functionally, required for accurate and efficient protein synthesis under certain stress conditions. May act as a fidelity factor of the translation reaction, by catalyzing a one-codon backward translocation of tRNAs on improperly translocated ribosomes. Back-translocation proceeds from a post-translocation (POST) complex to a pre-translocation (PRE) complex, thus giving elongation factor G a second chance to translocate the tRNAs correctly. Binds to ribosomes in a GTP-dependent manner. This chain is Elongation factor 4, found in Acaryochloris marina (strain MBIC 11017).